We begin with the raw amino-acid sequence, 426 residues long: Enolase (426 aa).

Gln165 lines the (2R)-2-phosphoglycerate pocket. Residue Glu209 is the Proton donor of the active site. Mg(2+)-binding residues include Asp244, Glu287, and Asp313. 4 residues coordinate (2R)-2-phosphoglycerate: Lys338, Arg367, Ser368, and Lys389. Catalysis depends on Lys338, which acts as the Proton acceptor.

The protein belongs to the enolase family. The cofactor is Mg(2+).

Its subcellular location is the cytoplasm. It localises to the secreted. It is found in the cell surface. It catalyses the reaction (2R)-2-phosphoglycerate = phosphoenolpyruvate + H2O. It participates in carbohydrate degradation; glycolysis; pyruvate from D-glyceraldehyde 3-phosphate: step 4/5. In terms of biological role, catalyzes the reversible conversion of 2-phosphoglycerate (2-PG) into phosphoenolpyruvate (PEP). It is essential for the degradation of carbohydrates via glycolysis. This Methanococcus vannielii (strain ATCC 35089 / DSM 1224 / JCM 13029 / OCM 148 / SB) protein is Enolase.